Here is a 363-residue protein sequence, read N- to C-terminus: 3-isopropylmalate dehydrogenase (363 aa).

An NAD(+)-binding site is contributed by 79–92 (GPKWEHLPPNDQPE). Positions 100, 110, 139, and 228 each coordinate substrate. The Mg(2+) site is built by D228, D252, and D256. 286 to 298 (GSAPDIAGKNIAN) serves as a coordination point for NAD(+).

Belongs to the isocitrate and isopropylmalate dehydrogenases family. LeuB type 1 subfamily. In terms of assembly, homodimer. Requires Mg(2+) as cofactor. Mn(2+) is required as a cofactor.

Its subcellular location is the cytoplasm. It catalyses the reaction (2R,3S)-3-isopropylmalate + NAD(+) = 4-methyl-2-oxopentanoate + CO2 + NADH. It functions in the pathway amino-acid biosynthesis; L-leucine biosynthesis; L-leucine from 3-methyl-2-oxobutanoate: step 3/4. Functionally, catalyzes the oxidation of 3-carboxy-2-hydroxy-4-methylpentanoate (3-isopropylmalate) to 3-carboxy-4-methyl-2-oxopentanoate. The product decarboxylates to 4-methyl-2 oxopentanoate. The polypeptide is 3-isopropylmalate dehydrogenase (Vibrio vulnificus (strain YJ016)).